The sequence spans 29 residues: Cytochrome b6-f complex subunit 8 (29 aa).

Residues Ile3 to Val23 traverse the membrane as a helical segment.

Belongs to the PetN family. The 4 large subunits of the cytochrome b6-f complex are cytochrome b6, subunit IV (17 kDa polypeptide, PetD), cytochrome f and the Rieske protein, while the 4 small subunits are PetG, PetL, PetM and PetN. The complex functions as a dimer.

It is found in the plastid. Its subcellular location is the chloroplast thylakoid membrane. Functionally, component of the cytochrome b6-f complex, which mediates electron transfer between photosystem II (PSII) and photosystem I (PSI), cyclic electron flow around PSI, and state transitions. The chain is Cytochrome b6-f complex subunit 8 from Gnetum parvifolium (Small-leaved jointfir).